Reading from the N-terminus, the 90-residue chain is Chaplin-G (90 aa).

The first 27 residues, 1 to 27 (MSRIAKAAGVALGTGAVVLSGTGMAMA), serve as a signal peptide directing secretion. The Chaplin domain occupies 38–78 (SPGVLSGNVVQVPVHVPVNLCGNTIDVIGLLNPAFGNACEN). Cys-58 and Cys-76 are joined by a disulfide.

It belongs to the chaplin family. Short chaplin subfamily.

It is found in the cell surface. The protein localises to the secreted. It localises to the cell wall. Its function is as follows. One of 8 partially redundant surface-active proteins required for efficient formation of aerial mycelium; the short chaplins assemble into a hydrophobic, amyloidal fibrillar surface layer that envelopes and protects aerial hyphae and spores, presumably anchored to the long chaplins. Chaplins have an overlapping function with the surface-active SapB peptide; chaplins are essential on minimal medium while on rich medium both chaplins and SapB are required for efficient aerial hyphae formation. Chaplins are also involved in cell attachment to a hydrophobic surface. Forms amyloid fibrils in vitro probably composed of stacked beta-sheets, at low extracellular concentrations individually restores the ability to form aerial hyphae to a chaplin-deficient strain. A small chaplin extract (ChpD, ChpE, ChpF, ChpG and ChpH) self-assembles into 2 different amyloids; small fibrils at the air-water interface form an amphipathic membrane that resembles spore-surface structures involved in aerial hyphae formation, and hydrophilic fibrils in solution that resemble the fibers that attach cells to a hydrophobic surface. At the air-water interface the hydrophilic surface is in contact with water (probably equivalent to the peptidoglycan layer), while the hydrophobic face is exposed to the air, making the surface of the aerial hyphae hydrophobic. A small chaplin extract applied to a chaplin-deficient strain restores aerial hyphae formation. The small chaplin extract forms an amyloid-like structure similar to that seen on the surface of cells without rodlets (rdlA-rdlB deletions), and is highly surface active, reducing surface tension from 72 to 26 mJ/m(2), which probably allows escape of hyphae from an aqueous environment into air. ChpF and ChpG are sufficient to restore the rodlet layer and hydrophobicity to a strain deleted for the other 6 chaplin genes. In Streptomyces coelicolor (strain ATCC BAA-471 / A3(2) / M145), this protein is Chaplin-G.